Consider the following 310-residue polypeptide: Olfactory receptor 10N1 (310 aa).

At 1–23 (MDNYTLLNEFILLGIPQTQGLET) the chain is on the extracellular side. N3 carries N-linked (GlcNAc...) asparagine glycosylation. Residues 24 to 44 (LLFVVFLFIYFFTLLGNSLIF) traverse the membrane as a helical segment. Over 45–55 (TAIISSSTLHT) the chain is Cytoplasmic. Residues 56–76 (PMYFFLGLLSVFDMLFPSVTC) traverse the membrane as a helical segment. At 77 to 95 (PKMLFYLSVRSPAISYKGC) the chain is on the extracellular side. Cysteines 95 and 187 form a disulfide. A helical membrane pass occupies residues 96 to 116 (AAQLFFYHLLGSTEGCLYSVM). Topologically, residues 117–136 (AYDRYVAICHPLRYMLIMKP) are cytoplasmic. A helical membrane pass occupies residues 137 to 157 (GVCVSLVIIAWLVGCLHATIL). Residues 158-202 (TSLTFQLVYCASNQVDYFFCDLPAVLPLACTDSKLARKVGSINVG) are Extracellular-facing. Residues 203–223 (FLALMLLFSVCVSYVHIGVAI) traverse the membrane as a helical segment. The Cytoplasmic segment spans residues 224-237 (LRIRSAEGRQKAFS). Residues 238–258 (TCSAHLTAILCAYGPVIIIYL) form a helical membrane-spanning segment. Over 259-264 (QRTPNP) the chain is Extracellular. Residues 265 to 285 (LLGAVVQILNNIVSPMLNSLI) form a helical membrane-spanning segment. The Cytoplasmic portion of the chain corresponds to 286–310 (YSLRNKEVKRSLRRVFQNITFHGQK).

The protein belongs to the G-protein coupled receptor 1 family.

Its subcellular location is the cell membrane. In terms of biological role, odorant receptor. This chain is Olfactory receptor 10N1, found in Mus musculus (Mouse).